A 314-amino-acid polypeptide reads, in one-letter code: Olfactory receptor 5B12 (314 aa).

Residues 1–23 lie on the Extracellular side of the membrane; sequence MENNTEVTEFILVGLTDDPELQI. N-linked (GlcNAc...) asparagine glycosylation is present at Asn-3. The helical transmembrane segment at 24–44 threads the bilayer; sequence PLFIVFLFIYLITLVGNLGMI. Residues 45 to 52 are Cytoplasmic-facing; sequence ELILLDSC. The helical transmembrane segment at 53–73 threads the bilayer; that stretch reads LHTPMYFFLSNLSLVDFGYSS. Residues 74 to 97 lie on the Extracellular side of the membrane; it reads AVTPKVMVGFLTGDKFILYNACAT. A disulfide bond links Cys-95 and Cys-187. Residues 98-118 traverse the membrane as a helical segment; it reads QFFFFVAFITAESFLLASMAY. Residues 119-137 are Cytoplasmic-facing; the sequence is DRYAALCKPLHYTTTMTTN. Residues 138 to 158 form a helical membrane-spanning segment; that stretch reads VCACLAIGSYICGFLNASIHT. The Extracellular portion of the chain corresponds to 159-194; sequence GNTFRLSFCRSNVVEHFFCDAPPLLTLSCSDNYISE. The helical transmembrane segment at 195–215 threads the bilayer; the sequence is MVIFFVVGFNDLFSILVILIS. The Cytoplasmic segment spans residues 216–235; it reads YLFIFITIMKMRSPEGRQKA. The helical transmembrane segment at 236-256 threads the bilayer; that stretch reads FSTCASHLTAVSIFYGTGIFM. Residues 257 to 269 lie on the Extracellular side of the membrane; that stretch reads YLRPNSSHFMGTD. N-linked (GlcNAc...) asparagine glycosylation occurs at Asn-261. Residues 270 to 290 traverse the membrane as a helical segment; it reads KMASVFYAIVIPMLNPLVYSL. The Cytoplasmic segment spans residues 291 to 314; sequence RNKEVKSAFKKTVGKAKASIGFIF.

This sequence belongs to the G-protein coupled receptor 1 family.

Its subcellular location is the cell membrane. Its function is as follows. Odorant receptor. In Homo sapiens (Human), this protein is Olfactory receptor 5B12 (OR5B12).